We begin with the raw amino-acid sequence, 76 residues long: Alpha/kappa-conotoxin-like pl14.3 (76 aa).

Residues 1–27 (MPSVRSVACCCLLWMMLSVQLVTPGSP) form the signal peptide. Residues 28–39 (ATAQLSGQRTAR) constitute a propeptide that is removed on maturation. 2 disulfides stabilise this stretch: cysteine 46–cysteine 61 and cysteine 50–cysteine 63. Aspartate 64 is modified (aspartic acid 1-amide). A propeptide spanning residues 65–76 (GKRDVVSSSMAV) is cleaved from the precursor.

Belongs to the conotoxin J superfamily. Expressed by the venom duct.

The protein resides in the secreted. Highly inhibits both nicotinic acetylcholine receptors (neuronal (alpha-3/beta-4) and muscular (alpha-1/beta-1/epsilon/delta) subtypes) and the voltage-gated potassium channel Kv1.6/KCNA6 subtype. The sequence is that of Alpha/kappa-conotoxin-like pl14.3 from Conus planorbis (Planorbis cone).